The sequence spans 476 residues: Cysteine--tRNA ligase (476 aa).

Cys-36 serves as a coordination point for Zn(2+). Residues 38-48 carry the 'HIGH' region motif; it reads PTVYDYAHIGN. Zn(2+)-binding residues include Cys-221, His-246, and Glu-250. The 'KMSKS' region motif lies at 278–282; the sequence is KMSKS. Lys-281 is a binding site for ATP.

Belongs to the class-I aminoacyl-tRNA synthetase family. In terms of assembly, monomer. Requires Zn(2+) as cofactor.

It localises to the cytoplasm. It catalyses the reaction tRNA(Cys) + L-cysteine + ATP = L-cysteinyl-tRNA(Cys) + AMP + diphosphate. This chain is Cysteine--tRNA ligase, found in Chlamydia felis (strain Fe/C-56) (Chlamydophila felis).